We begin with the raw amino-acid sequence, 424 residues long: Serine--tRNA ligase (424 aa).

231–233 provides a ligand contact to L-serine; it reads TAE. 262-264 lines the ATP pocket; the sequence is RSE. Position 285 (Glu285) interacts with L-serine. An ATP-binding site is contributed by 349–352; that stretch reads EISS. L-serine is bound at residue Ser385.

This sequence belongs to the class-II aminoacyl-tRNA synthetase family. Type-1 seryl-tRNA synthetase subfamily. Homodimer. The tRNA molecule binds across the dimer.

It localises to the cytoplasm. The enzyme catalyses tRNA(Ser) + L-serine + ATP = L-seryl-tRNA(Ser) + AMP + diphosphate + H(+). It carries out the reaction tRNA(Sec) + L-serine + ATP = L-seryl-tRNA(Sec) + AMP + diphosphate + H(+). Its pathway is aminoacyl-tRNA biosynthesis; selenocysteinyl-tRNA(Sec) biosynthesis; L-seryl-tRNA(Sec) from L-serine and tRNA(Sec): step 1/1. Its function is as follows. Catalyzes the attachment of serine to tRNA(Ser). Is also able to aminoacylate tRNA(Sec) with serine, to form the misacylated tRNA L-seryl-tRNA(Sec), which will be further converted into selenocysteinyl-tRNA(Sec). This Bacillus cereus (strain ZK / E33L) protein is Serine--tRNA ligase.